Reading from the N-terminus, the 408-residue chain is MQVEILATGDELLTGQVVDTNSPWLMDRLWDLGLMVRRKTLVADDRDDLRAAILETTARADLVVMSGGMGPTEDDLTSECVAAVLGVPLERHEPSIEVLRERFRKFGRALTPNNEKQAWFPRGAEVIPNRWGSAPGFTVPVGRGRVVCLPGVPVEYRGLCEEWVLPHVGARLSEVPAAGLVKLFAVPESHADHAMRPVMDDPANAGVRFGYRAHWPETHVKWTVPGPDAAGRAARIRERVLGIFGEQVFGEGKDELPDLVVARLAARGERVALGESCTGGMVAELLTAVPGASAVLDLGVVAYANAAKERVLGVPAELLAAHGAVSEPVARALAEGARRAGGAAWGVGITGIAGPSGGTPEKPVGTVHLAVAGPSGTETVARAYRGDRDRVRRQAAYEALNLLRLALR.

It belongs to the CinA family.

The sequence is that of CinA-like protein from Anaeromyxobacter dehalogenans (strain 2CP-1 / ATCC BAA-258).